The primary structure comprises 96 residues: Small ribosomal subunit protein uS15 (96 aa).

The protein belongs to the universal ribosomal protein uS15 family. As to quaternary structure, part of the 30S ribosomal subunit. Forms a bridge to the 50S subunit in the 70S ribosome, contacting the 23S rRNA.

Functionally, one of the primary rRNA binding proteins, it binds directly to 16S rRNA where it helps nucleate assembly of the platform of the 30S subunit by binding and bridging several RNA helices of the 16S rRNA. Forms an intersubunit bridge (bridge B4) with the 23S rRNA of the 50S subunit in the ribosome. This Streptomyces griseus subsp. griseus (strain JCM 4626 / CBS 651.72 / NBRC 13350 / KCC S-0626 / ISP 5235) protein is Small ribosomal subunit protein uS15.